Reading from the N-terminus, the 351-residue chain is DNA polymerase IV (351 aa).

A UmuC domain is found at 4–185; that stretch reads IIHVDMDCFF…LPLAKIPGVG (182 aa). Mg(2+) is bound by residues aspartate 8 and aspartate 103. Residue glutamate 104 is part of the active site.

It belongs to the DNA polymerase type-Y family. In terms of assembly, monomer. Mg(2+) is required as a cofactor.

Its subcellular location is the cytoplasm. The catalysed reaction is DNA(n) + a 2'-deoxyribonucleoside 5'-triphosphate = DNA(n+1) + diphosphate. Its function is as follows. Poorly processive, error-prone DNA polymerase involved in untargeted mutagenesis. Copies undamaged DNA at stalled replication forks, which arise in vivo from mismatched or misaligned primer ends. These misaligned primers can be extended by PolIV. Exhibits no 3'-5' exonuclease (proofreading) activity. May be involved in translesional synthesis, in conjunction with the beta clamp from PolIII. The sequence is that of DNA polymerase IV from Escherichia coli O1:K1 / APEC.